Reading from the N-terminus, the 106-residue chain is Thioredoxin (106 aa).

At lysine 3 the chain carries N6-acetyllysine. Residues 3–106 (KQIESKTAFQ…KLEATINELV (104 aa)) enclose the Thioredoxin domain. The residue at position 8 (lysine 8) is an N6-succinyllysine. Residues cysteine 32 and cysteine 35 each act as nucleophile in the active site. The cysteines at positions 32 and 35 are disulfide-linked. Lysine 39 is modified (N6-acetyllysine). S-nitrosocysteine is present on residues cysteine 62 and cysteine 69. Cysteine 73 carries the S-nitrosocysteine; alternate modification. Lysine 95 bears the N6-acetyllysine; alternate mark. An N6-succinyllysine; alternate modification is found at lysine 95.

This sequence belongs to the thioredoxin family. As to quaternary structure, homodimer; disulfide-linked. Interacts with TXNIP through the redox-active site. Interacts with MAP3K5 and CASP3. Interacts with APEX1; the interaction stimulates the FOS/JUN AP-1 DNA-binding activity in a redox-dependent manner. In terms of processing, in the fully reduced protein, both Cys-69 and Cys-73 are nitrosylated in response to nitric oxide (NO). When two disulfide bonds are present in the protein, only Cys-73 is nitrosylated. Cys-73 can serve as donor for nitrosylation of target proteins.

Its subcellular location is the nucleus. The protein localises to the cytoplasm. It is found in the secreted. Participates in various redox reactions through the reversible oxidation of its active center dithiol to a disulfide and catalyzes dithiol-disulfide exchange reactions. Plays a role in the reversible S-nitrosylation of cysteine residues in target proteins, and thereby contributes to the response to intracellular nitric oxide. Nitrosylates the active site Cys of CASP3 in response to nitric oxide (NO), and thereby inhibits caspase-3 activity. Induces the FOS/JUN AP-1 DNA binding activity in ionizing radiation (IR) cells through its oxidation/reduction status and stimulates AP-1 transcriptional activity. This Pongo abelii (Sumatran orangutan) protein is Thioredoxin (TXN).